The primary structure comprises 517 residues: Acetylcholine receptor subunit delta (517 aa).

The signal sequence occupies residues 1–21 (MAGPVPTLGLLAALVVCGSWG). Residues 22 to 245 (LNEEQRLIQH…VTFYLIIRRK (224 aa)) lie on the Extracellular side of the membrane. N-linked (GlcNAc...) asparagine glycans are attached at residues N97, N164, and N190. Cysteines 151 and 165 form a disulfide. Helical transmembrane passes span 246–270 (PLFYIINILVPCVLISFMINLVFYL), 278–296 (TSVAISVLLAQSVFLLLIS), and 312–333 (FLLFGMVLVTMVVVICVIVLNI). Topologically, residues 334–471 (HFRTPSTHVL…WNQVARTVDR (138 aa)) are cytoplasmic. Y390 bears the Phosphotyrosine; by Tyr-kinases mark. A helical transmembrane segment spans residues 472–490 (LCLFVVTPVMVVGTAWIFL).

The protein belongs to the ligand-gated ion channel (TC 1.A.9) family. Acetylcholine receptor (TC 1.A.9.1) subfamily. Delta/CHRND sub-subfamily. As to quaternary structure, pentamer of two alpha chains, and one each of the beta, delta, and gamma (in immature muscle) or epsilon (in mature muscle) chains. The muscle heteropentamer composed of alpha-1, beta-1, delta, epsilon subunits interacts with the alpha-conotoxin ImII.

It is found in the postsynaptic cell membrane. The protein resides in the cell membrane. The catalysed reaction is K(+)(in) = K(+)(out). The enzyme catalyses Na(+)(in) = Na(+)(out). After binding acetylcholine, the AChR responds by an extensive change in conformation that affects all subunits and leads to opening of an ion-conducting channel across the plasma membrane. In Rattus norvegicus (Rat), this protein is Acetylcholine receptor subunit delta (Chrnd).